We begin with the raw amino-acid sequence, 352 residues long: tRNA pseudouridine synthase D (352 aa).

Residue aspartate 81 is the Nucleophile of the active site. The TRUD domain maps to 157–303 (GIPNYFGAQR…MEHERRILRL (147 aa)).

Belongs to the pseudouridine synthase TruD family.

The catalysed reaction is uridine(13) in tRNA = pseudouridine(13) in tRNA. Responsible for synthesis of pseudouridine from uracil-13 in transfer RNAs. In Pseudomonas syringae pv. syringae (strain B728a), this protein is tRNA pseudouridine synthase D.